A 118-amino-acid polypeptide reads, in one-letter code: Holo-[acyl-carrier-protein] synthase (118 aa).

Mg(2+) contacts are provided by Asp8 and Glu58.

The protein belongs to the P-Pant transferase superfamily. AcpS family. It depends on Mg(2+) as a cofactor.

It localises to the cytoplasm. The enzyme catalyses apo-[ACP] + CoA = holo-[ACP] + adenosine 3',5'-bisphosphate + H(+). Transfers the 4'-phosphopantetheine moiety from coenzyme A to a Ser of acyl-carrier-protein. In Streptococcus pyogenes serotype M28 (strain MGAS6180), this protein is Holo-[acyl-carrier-protein] synthase.